A 153-amino-acid chain; its full sequence is MAPKAEKKPAAKKPAEEEPAAEKAEKAPAGKKPKAEKRLPAGKAEKGSGEGRKAGRKKAKKSVETYKIYIFKVLKQVHPDIGISSKAMSIMNSFINDIFEKLAGESAKLARYNKKPTITSREIQTSVRLVLPGELAKHAVSEGTKAVTKFTSA.

Basic and acidic residues-rich tracts occupy residues 1 to 28 and 36 to 53; these read MAPK…EKAP and EKRL…EGRK. Residues 1 to 61 are disordered; sequence MAPKAEKKPA…RKAGRKKAKK (61 aa). Lysine 7 and lysine 37 each carry N6-acetyllysine. Residue lysine 149 forms a Glycyl lysine isopeptide (Lys-Gly) (interchain with G-Cter in ubiquitin) linkage.

The protein belongs to the histone H2B family. In terms of assembly, the nucleosome is a histone octamer containing two molecules each of H2A, H2B, H3 and H4 assembled in one H3-H4 heterotetramer and two H2A-H2B heterodimers. The octamer wraps approximately 147 bp of DNA. In terms of processing, can be acetylated to form H2BK6ac and H2BK33ac. Post-translationally, monoubiquitinated by BRE1 to form H2BK143ub1 and deubiquitinated by UBP26. Required for heterochromatic histone H3 di- and trimethylation at H3K4me. May give a specific tag for epigenetic transcriptional activation.

It localises to the nucleus. The protein resides in the chromosome. Core component of nucleosome. Nucleosomes wrap and compact DNA into chromatin, limiting DNA accessibility to the cellular machineries which require DNA as a template. Histones thereby play a central role in transcription regulation, DNA repair, DNA replication and chromosomal stability. DNA accessibility is regulated via a complex set of post-translational modifications of histones, also called histone code, and nucleosome remodeling. The chain is Histone H2B.3 (H2B.3) from Oryza sativa subsp. japonica (Rice).